The following is a 92-amino-acid chain: Large ribosomal subunit protein eL43 (92 aa).

A C4-type zinc finger spans residues 39–60 (CDFCGKYGMKRQAVGIWCCKGC).

This sequence belongs to the eukaryotic ribosomal protein eL43 family.

The sequence is that of Large ribosomal subunit protein eL43 (RPL37a) from Ostreococcus tauri.